A 362-amino-acid polypeptide reads, in one-letter code: Shewanella-like protein phosphatase 1 (362 aa).

Residues 1 to 23 (MIFKKALYILLFLYIAIVKKGES) form the signal peptide. Residues Asp-65, His-67, Asp-101, and Asn-136 each contribute to the Mn(2+) site. His-137 functions as the Proton donor in the catalytic mechanism. His-196 contacts Mn(2+).

This sequence belongs to the metallophosphoesterase superfamily. SLP family. It depends on Mn(2+) as a cofactor.

Phosphatase which plays an essential role in the development and differentiation of the ookinete and in the formation of ookinete micronemes. The protein is Shewanella-like protein phosphatase 1 of Plasmodium berghei (strain Anka).